The chain runs to 93 residues: Large ribosomal subunit protein bL27 (93 aa).

A propeptide spanning residues 1-10 (MLLKLQIQLF) is cleaved from the precursor.

This sequence belongs to the bacterial ribosomal protein bL27 family. In terms of processing, the N-terminus is cleaved by ribosomal processing cysteine protease Prp.

This is Large ribosomal subunit protein bL27 from Phytoplasma australiense.